The following is a 375-amino-acid chain: Chaperone protein DnaJ (375 aa).

The J domain maps to 4–68 (DYYEILGVSR…ETRARYDRFG (65 aa)). The CR-type zinc finger occupies 134–216 (GGEKEIRIRH…CGGSGRKQET (83 aa)). Cys-147, Cys-150, Cys-164, Cys-167, Cys-190, Cys-193, Cys-204, and Cys-207 together coordinate Zn(2+). CXXCXGXG motif repeat units lie at residues 147-154 (CQVCEGSG), 164-171 (CSTCSGSG), 190-197 (CPTCNGSG), and 204-211 (CEACGGSG).

This sequence belongs to the DnaJ family. As to quaternary structure, homodimer. Zn(2+) is required as a cofactor.

It localises to the cytoplasm. In terms of biological role, participates actively in the response to hyperosmotic and heat shock by preventing the aggregation of stress-denatured proteins and by disaggregating proteins, also in an autonomous, DnaK-independent fashion. Unfolded proteins bind initially to DnaJ; upon interaction with the DnaJ-bound protein, DnaK hydrolyzes its bound ATP, resulting in the formation of a stable complex. GrpE releases ADP from DnaK; ATP binding to DnaK triggers the release of the substrate protein, thus completing the reaction cycle. Several rounds of ATP-dependent interactions between DnaJ, DnaK and GrpE are required for fully efficient folding. Also involved, together with DnaK and GrpE, in the DNA replication of plasmids through activation of initiation proteins. This Gloeothece citriformis (strain PCC 7424) (Cyanothece sp. (strain PCC 7424)) protein is Chaperone protein DnaJ.